The chain runs to 232 residues: Sec-independent protein translocase protein TatB (232 aa).

The helical transmembrane segment at 1 to 21 (MFDIGFGELMLLFVIGLVVLG) threads the bilayer. Disordered regions lie at residues 108–129 (EPHT…GVTP) and 176–232 (AAST…NNDR). Composition is skewed to low complexity over residues 189-203 (ADSA…ATPA) and 214-232 (RAAT…NNDR).

Belongs to the TatB family. As to quaternary structure, the Tat system comprises two distinct complexes: a TatABC complex, containing multiple copies of TatA, TatB and TatC subunits, and a separate TatA complex, containing only TatA subunits. Substrates initially bind to the TatABC complex, which probably triggers association of the separate TatA complex to form the active translocon.

The protein localises to the cell inner membrane. Part of the twin-arginine translocation (Tat) system that transports large folded proteins containing a characteristic twin-arginine motif in their signal peptide across membranes. Together with TatC, TatB is part of a receptor directly interacting with Tat signal peptides. TatB may form an oligomeric binding site that transiently accommodates folded Tat precursor proteins before their translocation. The polypeptide is Sec-independent protein translocase protein TatB (Sodalis glossinidius (strain morsitans)).